Here is a 593-residue protein sequence, read N- to C-terminus: Early nodule-specific protein 2 (593 aa).

The span at 71-110 (EKPPIYEPPPTEEPPPVYKPPIIHPPPNYKPPAHTPPIYH) shows a compositional bias: pro residues. A disordered region spans residues 71–593 (EKPPIYEPPP…GHYPPYKKNQ (523 aa)). Basic and acidic residues-rich tracts occupy residues 123–138 (PYEK…EYQP) and 166–195 (PPYE…EKPP). Over residues 196 to 210 (PEYTPPYEKPPPEYQ) the composition is skewed to pro residues. Basic and acidic residues-rich tracts occupy residues 227–265 (PPHE…EKPP) and 275–292 (PPHE…EKPP). Residues 294-306 (VHPPPEYQPPYLK) show a composition bias toward pro residues. Composition is skewed to basic and acidic residues over residues 339 to 350 (PPHEKPPHEHPP), 360 to 372 (PPPE…ENPP), 382 to 394 (PPHE…EHPP), and 404 to 421 (PPPE…EHPP). Residues 422 to 435 (PEYQPPQENPPPEY) show a composition bias toward pro residues. Over residues 506–522 (PRHEKPMPKYQPPHEKL) the composition is skewed to basic and acidic residues. Over residues 532–558 (KTPPPQAYHPPPPIYHHPPFHPPPHVK) the composition is skewed to pro residues.

Belongs to the nodulin 75 family.

Functionally, involved in early stages of root nodule development. The sequence is that of Early nodule-specific protein 2 from Medicago truncatula (Barrel medic).